The chain runs to 43 residues: Myotoxin-2 (43 aa).

Cystine bridges form between Cys-4–Cys-36, Cys-11–Cys-30, and Cys-18–Cys-37.

It belongs to the crotamine-myotoxin family. Monomer. In terms of tissue distribution, expressed by the venom gland.

Its subcellular location is the secreted. In terms of biological role, cationic peptide that possesses multiple functions. It acts as a cell-penetrating peptide (CPP), and as a potent voltage-gated potassium channel (Kv) inhibitor. It exhibits antimicrobial activities, hind limb paralysis, and severe muscle necrosis by a non-enzymatic mechanism. The protein is Myotoxin-2 of Crotalus concolor (Midget faded rattlesnake).